The primary structure comprises 125 residues: MIVMSLTNEQIIEAIASKSVSEIVELISAMEEKFGVSAAAVAAAAPAAGAAAAEEKTEFDVVLKAAGANKVAVIKAVRGATGLGLKEAKDLVESAPANLKEGVSKEEAESLKKELEAAGAEVEIK.

Belongs to the bacterial ribosomal protein bL12 family. As to quaternary structure, homodimer. Part of the ribosomal stalk of the 50S ribosomal subunit. Forms a multimeric L10(L12)X complex, where L10 forms an elongated spine to which 2 to 4 L12 dimers bind in a sequential fashion. Binds GTP-bound translation factors.

In terms of biological role, forms part of the ribosomal stalk which helps the ribosome interact with GTP-bound translation factors. Is thus essential for accurate translation. This Mannheimia succiniciproducens (strain KCTC 0769BP / MBEL55E) protein is Large ribosomal subunit protein bL12.